The primary structure comprises 325 residues: GMP reductase (325 aa).

The active-site Thioimidate intermediate is C174. I203–V226 is a binding site for NADP(+).

It belongs to the IMPDH/GMPR family. GuaC type 2 subfamily.

The catalysed reaction is IMP + NH4(+) + NADP(+) = GMP + NADPH + 2 H(+). Its function is as follows. Catalyzes the irreversible NADPH-dependent deamination of GMP to IMP. It functions in the conversion of nucleobase, nucleoside and nucleotide derivatives of G to A nucleotides, and in maintaining the intracellular balance of A and G nucleotides. This Staphylococcus epidermidis (strain ATCC 35984 / DSM 28319 / BCRC 17069 / CCUG 31568 / BM 3577 / RP62A) protein is GMP reductase.